The primary structure comprises 131 residues: Methylglyoxal synthase (131 aa).

Positions 1 to 131 (MKIALIAHDK…GDLDYRKLRK (131 aa)) constitute an MGS-like domain. Substrate is bound by residues His-8, Lys-12, 34-37 (TGTT), and 54-55 (SG). Asp-60 serves as the catalytic Proton donor/acceptor. Substrate is bound at residue His-87.

It belongs to the methylglyoxal synthase family.

The catalysed reaction is dihydroxyacetone phosphate = methylglyoxal + phosphate. Catalyzes the formation of methylglyoxal from dihydroxyacetone phosphate. The sequence is that of Methylglyoxal synthase from Bacillus anthracis (strain A0248).